Reading from the N-terminus, the 502-residue chain is MGTENKEVIPKEEISEESEPHGSLLEKFPKVVYQGHEFGAGCEEDMLEGHSRESMEEVIEQMSPQERDFPSGLMIFKKSPSSEKDRENNESERGCSPSPNLVTHQGDTTEGVSAFATSGQNFLEILESNKTQRSSVGEKPHTCKECGKAFNQNSHLIQHMRVHSGEKPFECKECGKTFGTNSSLRRHLRIHAGEKPFACNECGKAFIQSSHLIHHHRIHTGERPYKCEECGKAFSQNSALILHQRIHTGEKPYECNECGKTFRVSSQLIQHQRIHTEERYHECNECGKAFKHSSGLIRHQKIHTGEKPYLCNECGKGFGQSSELIRHQRIHTGDKPYECNECGKTFGQNSEIIRHIRIHTGEKPYVCKECGKAFRGNSELLRHERIHTGEKPYECFECGKAFRRTSHLIVHQRIHTGEKPHQCNECARTFWDNSELLLHQKIHIGEKPYECSECEKTFSQHSQLIIHQRIHTGEKPYECQECQKTFSRSSHLLRHQSVHCME.

Basic and acidic residues-rich tracts occupy residues 1-13 (MGTENKEVIPKEE) and 80-93 (PSSEKDRENNESER). Disordered regions lie at residues 1 to 26 (MGTENKEVIPKEEISEESEPHGSLLE) and 47 to 103 (LEGH…NLVT). Residues lysine 6 and lysine 11 each participate in a glycyl lysine isopeptide (Lys-Gly) (interchain with G-Cter in SUMO2) cross-link. C2H2-type zinc fingers lie at residues 141–163 (HTCKECGKAFNQNSHLIQHMRVH), 169–191 (FECKECGKTFGTNSSLRRHLRIH), 197–219 (FACNECGKAFIQSSHLIHHHRIH), 225–247 (YKCEECGKAFSQNSALILHQRIH), 253–275 (YECNECGKTFRVSSQLIQHQRIH), 281–303 (HECNECGKAFKHSSGLIRHQKIH), 309–331 (YLCNECGKGFGQSSELIRHQRIH), 337–359 (YECNECGKTFGQNSEIIRHIRIH), 365–387 (YVCKECGKAFRGNSELLRHERIH), 393–415 (YECFECGKAFRRTSHLIVHQRIH), 421–443 (HQCNECARTFWDNSELLLHQKIH), 449–471 (YECSECEKTFSQHSQLIIHQRIH), and 477–499 (YECQECQKTFSRSSHLLRHQSVH).

It belongs to the krueppel C2H2-type zinc-finger protein family.

The protein localises to the nucleus. May be involved in transcriptional regulation. In Homo sapiens (Human), this protein is Zinc finger protein 3 homolog (ZFP3).